A 302-amino-acid chain; its full sequence is Citrate lyase subunit beta (302 aa).

The substrate site is built by Arg-76 and Glu-139. Positions 139 and 166 each coordinate Mg(2+).

Belongs to the HpcH/HpaI aldolase family. Citrate lyase beta subunit subfamily. As to quaternary structure, oligomer with a subunit composition of (alpha,beta,gamma)6. Mg(2+) serves as cofactor.

Its subcellular location is the cytoplasm. The catalysed reaction is citrate = oxaloacetate + acetate. It catalyses the reaction (3S)-citryl-CoA = oxaloacetate + acetyl-CoA. Functionally, represents a citryl-ACP lyase. The polypeptide is Citrate lyase subunit beta (citE) (Escherichia coli O6:H1 (strain CFT073 / ATCC 700928 / UPEC)).